The chain runs to 174 residues: Large ribosomal subunit protein uL10 (174 aa).

This sequence belongs to the universal ribosomal protein uL10 family. Part of the ribosomal stalk of the 50S ribosomal subunit. The N-terminus interacts with L11 and the large rRNA to form the base of the stalk. The C-terminus forms an elongated spine to which L12 dimers bind in a sequential fashion forming a multimeric L10(L12)X complex.

Its function is as follows. Forms part of the ribosomal stalk, playing a central role in the interaction of the ribosome with GTP-bound translation factors. The protein is Large ribosomal subunit protein uL10 of Geobacter metallireducens (strain ATCC 53774 / DSM 7210 / GS-15).